Here is a 470-residue protein sequence, read N- to C-terminus: 3-isopropylmalate dehydratase large subunit (470 aa).

Residues cysteine 351, cysteine 411, and cysteine 414 each coordinate [4Fe-4S] cluster.

The protein belongs to the aconitase/IPM isomerase family. LeuC type 1 subfamily. Heterodimer of LeuC and LeuD. It depends on [4Fe-4S] cluster as a cofactor.

It carries out the reaction (2R,3S)-3-isopropylmalate = (2S)-2-isopropylmalate. The protein operates within amino-acid biosynthesis; L-leucine biosynthesis; L-leucine from 3-methyl-2-oxobutanoate: step 2/4. In terms of biological role, catalyzes the isomerization between 2-isopropylmalate and 3-isopropylmalate, via the formation of 2-isopropylmaleate. The chain is 3-isopropylmalate dehydratase large subunit from Rhodopseudomonas palustris (strain BisA53).